Reading from the N-terminus, the 414-residue chain is Serine hydroxymethyltransferase (414 aa).

Residues Leu-117 and 121 to 123 contribute to the (6S)-5,6,7,8-tetrahydrofolate site; that span reads GHL. Lys-226 is subject to N6-(pyridoxal phosphate)lysine.

This sequence belongs to the SHMT family. In terms of assembly, homodimer. Pyridoxal 5'-phosphate is required as a cofactor.

It is found in the cytoplasm. It carries out the reaction (6R)-5,10-methylene-5,6,7,8-tetrahydrofolate + glycine + H2O = (6S)-5,6,7,8-tetrahydrofolate + L-serine. Its pathway is one-carbon metabolism; tetrahydrofolate interconversion. It functions in the pathway amino-acid biosynthesis; glycine biosynthesis; glycine from L-serine: step 1/1. Its function is as follows. Catalyzes the reversible interconversion of serine and glycine with tetrahydrofolate (THF) serving as the one-carbon carrier. This reaction serves as the major source of one-carbon groups required for the biosynthesis of purines, thymidylate, methionine, and other important biomolecules. Also exhibits THF-independent aldolase activity toward beta-hydroxyamino acids, producing glycine and aldehydes, via a retro-aldol mechanism. The chain is Serine hydroxymethyltransferase from Dictyoglomus turgidum (strain DSM 6724 / Z-1310).